Here is a 438-residue protein sequence, read N- to C-terminus: Thymidine phosphorylase (438 aa).

The protein belongs to the thymidine/pyrimidine-nucleoside phosphorylase family. In terms of assembly, homodimer.

It catalyses the reaction thymidine + phosphate = 2-deoxy-alpha-D-ribose 1-phosphate + thymine. The protein operates within pyrimidine metabolism; dTMP biosynthesis via salvage pathway; dTMP from thymine: step 1/2. Functionally, the enzymes which catalyze the reversible phosphorolysis of pyrimidine nucleosides are involved in the degradation of these compounds and in their utilization as carbon and energy sources, or in the rescue of pyrimidine bases for nucleotide synthesis. This is Thymidine phosphorylase from Burkholderia orbicola (strain MC0-3).